The sequence spans 747 residues: Cyclic di-GMP phosphodiesterase PdeF (747 aa).

Over 1–14 (MKLNATYIKIRDKW) the chain is Periplasmic. The helical transmembrane segment at 15–36 (WGLPLFLPSLILPIFAHINTFA) threads the bilayer. Over 37–42 (HISSGE) the chain is Cytoplasmic. The helical transmembrane segment at 43-65 (VFLFYLPLALMISMMMFFSWAAL) threads the bilayer. Topologically, residues 66–79 (PGIALGIFVRKYAE) are periplasmic. A helical membrane pass occupies residues 80-102 (LGFYETLSLTANFIIIIILCWGG). Residues 103–128 (YRVFTPRRNNVSHGDTRLISQRIFWQ) are Cytoplasmic-facing. A helical membrane pass occupies residues 129–151 (IVFPATLFLILFQFAAFVGLLAS). Over 152 to 165 (RENLVGVMPFNLGT) the chain is Periplasmic. The chain crosses the membrane as a helical span at residues 166–188 (LINYQALLVGNLIGVPLCYFIIR). Topologically, residues 189–215 (VVRNPFYLRSYYSQLKQQVDAKVTKKE) are cytoplasmic. The chain crosses the membrane as a helical span at residues 216–235 (FALWLLALGALLLLLCMPLN). Over 236–239 (EKST) the chain is Periplasmic. The helical transmembrane segment at 240-259 (IFSTNYTLSLLLPLMMWGAM) threads the bilayer. The Cytoplasmic portion of the chain corresponds to 260–265 (RYGYKL). The helical transmembrane segment at 266–285 (ISLLWAVVLMISIHSYQNYI) threads the bilayer. At 286–294 (PIYPGYTTQ) the chain is on the periplasmic side. A helical transmembrane segment spans residues 295–317 (LTITSSSYLVFSFIVNYMAVLAT). Topologically, residues 318 to 747 (RQRAVVRRIQ…NEIEPIRESA (430 aa)) are cytoplasmic. The 252-residue stretch at 493-744 (KVAMMNRLQQ…DTLNEIEPIR (252 aa)) folds into the EAL domain.

Mg(2+) serves as cofactor. Mn(2+) is required as a cofactor.

The protein resides in the cell inner membrane. The catalysed reaction is 3',3'-c-di-GMP + H2O = 5'-phosphoguanylyl(3'-&gt;5')guanosine + H(+). Inhibited by pGpG. Functionally, phosphodiesterase (PDE) that catalyzes the hydrolysis of cyclic-di-GMP (c-di-GMP) to 5'-pGpG. Truncated proteins consisting of the GGDEF/EAL domains (residues 319-747) or of the EAL domain alone (481-747) have c-di-GMP phosphodiesterase activity. They do not have diguanylate cyclase activity. Cyclic-di-GMP is a second messenger which controls cell surface-associated traits in bacteria. The polypeptide is Cyclic di-GMP phosphodiesterase PdeF (Escherichia coli (strain K12)).